We begin with the raw amino-acid sequence, 405 residues long: MKILEVNCGSSSLKYQLIDMEDEKVLAKGLVERIGIDGSILTHKVNGEKHVVSEPIKDHRVAVKLVLEALVDKQHGVIKDMSEISAVGHRVVHGGEQYSDAVIIDDKVMESLKDCSKLAPLHNPPNIIGINACKAIMPNTPMVAVFDTAFHHTMPKYAYIYPLPYELYERYGIRKYGFHGTSHRFVSEEAARLMGKDISELKIITCHLGNGASICAVDRGKSIDTNMGFTPLAGLAMGTRCGDIDPAIIPFLTNEIGMSIDEISNIMNNKSGILGMSGISSDFRDVEEIASFKHDRRAQLALDVFYYRVKSFIGSYVAVLDGVDAIVFTAGVGENSSIGRAEICSGLTYLGITIDEEKNNIRGKATEITTANSKTKVFVIPTNEELVIARDTKFLVQKKISHKSK.

Asparagine 7 contributes to the Mg(2+) binding site. Lysine 14 is a binding site for ATP. Position 90 (arginine 90) interacts with substrate. Aspartate 147 serves as the catalytic Proton donor/acceptor. Residues 207–211 (HLGNG), 282–284 (DFR), and 331–335 (GVGEN) each bind ATP. Residue glutamate 384 coordinates Mg(2+).

The protein belongs to the acetokinase family. Homodimer. Mg(2+) serves as cofactor. It depends on Mn(2+) as a cofactor.

Its subcellular location is the cytoplasm. It carries out the reaction acetate + ATP = acetyl phosphate + ADP. The protein operates within metabolic intermediate biosynthesis; acetyl-CoA biosynthesis; acetyl-CoA from acetate: step 1/2. Catalyzes the formation of acetyl phosphate from acetate and ATP. Can also catalyze the reverse reaction. This is Acetate kinase from Clostridium kluyveri (strain ATCC 8527 / DSM 555 / NBRC 12016 / NCIMB 10680 / K1).